Here is a 383-residue protein sequence, read N- to C-terminus: Large ribosomal subunit protein uL3 (383 aa).

The protein belongs to the universal ribosomal protein uL3 family.

It is found in the cytoplasm. This Encephalitozoon cuniculi (strain GB-M1) (Microsporidian parasite) protein is Large ribosomal subunit protein uL3 (RPL3-1).